The following is a 488-amino-acid chain: Cytochrome P450 family 716 subfamily AD polypeptide 2 (488 aa).

A helical transmembrane segment spans residues 5–25 (LLLLSTLLILTLCCHFFYLFI). Cysteine 433 provides a ligand contact to heme.

It belongs to the cytochrome P450 family. Heme is required as a cofactor. As to expression, expressed in maturing fruits and in juice vesicles.

Its subcellular location is the membrane. It catalyses the reaction (1R,2R,3S,8R,10R,11R,15S,16S)-3-(acetyloxy)-15-[(4R)-4-[(2S)-3,3-dimethyloxiran-2-yl]-1,4-dihydroxybutan-2-yl]-2,7,7,11,16-pentamethyl-5-oxo-6-oxatetracyclo[9.7.0.0(2,8).0(12,16)]octadec-12-en-10-yl acetate + reduced [NADPH--hemoprotein reductase] + O2 = (1R,2R,3S,8R,10R,11R,15S,16S)-3-(acetyloxy)-15-(1-hydroxy-4-oxobutan-2-yl)-2,7,7,11,16-pentamethyl-5-oxo-6-oxatetracyclo[9.7.0.0(2,8).0(12,16)]octadec-12-en-10-yl acetate + 2-methylpropanoate + oxidized [NADPH--hemoprotein reductase] + H2O + 2 H(+). It functions in the pathway secondary metabolite biosynthesis; terpenoid biosynthesis. In terms of biological role, monooxygenase involved in the biosynthesis of limonoids triterpene natural products such as limonin, a compound with insecticidal activity responsible for the bitter taste in citrus. Catalyzes the formation of (1R,2R,3S,8R,10R,11R,15S,16S)-3-(acetyloxy)-15-(1-hydroxy-4-oxobutan-2-yl)-2,7,7,11,16-pentamethyl-5-oxo-6-oxatetracyclo[9.7.0.0(2,8).0(12,16)]octadec-12-en-10-yl acetate. This is Cytochrome P450 family 716 subfamily AD polypeptide 2 from Citrus sinensis (Sweet orange).